A 449-amino-acid chain; its full sequence is MPSSLWKHCLNHLEGELDPQEFNTYIRPLQAIQQGTSLQLYAPNQFVIDWVQNCAESRINALLSHYSSGRIEKALLEVGSCSLQPQPHIQAVELTSKSARSSSRVVDRIPESRLNKNYTFDSFVEGKSNQLPRAASHQVAENPGSAYNPLFIYGGVGLGKTHLMHAVGNYIRSRNPSARVVYLHSEQFVAEMIKALQLNAINEFKTRYRSVDILLIDDIQFFAGKERSQEEFFYTFNTLLEVQHQIILTCDRFPKEVNGLEERLTSRFGWGLTVAVEPPELETRVAILMNKASIENIILSDDVAFFLGRLIYSNIRELEGALRRVIAYSRFTHRPITMELTREALKDLLTLQEKLVTIENIQKTVAEYYKIRVSDLSSKRRSRVVARPRQTAMSLSKELTDHSLTEIGKFFGGRDHTTVLHACRKINELKSIDRRMAEDYHNLLKKLST.

A domain I, interacts with DnaA modulators region spans residues 1–71 (MPSSLWKHCL…LLSHYSSGRI (71 aa)). The tract at residues 71–112 (IEKALLEVGSCSLQPQPHIQAVELTSKSARSSSRVVDRIPES) is domain II. A domain III, AAA+ region region spans residues 113–329 (RLNKNYTFDS…GALRRVIAYS (217 aa)). Residues Gly157, Gly159, Lys160, and Thr161 each contribute to the ATP site. Residues 330 to 449 (RFTHRPITME…YHNLLKKLST (120 aa)) are domain IV, binds dsDNA.

This sequence belongs to the DnaA family. In terms of assembly, oligomerizes as a right-handed, spiral filament on DNA at oriC.

The protein localises to the cytoplasm. Functionally, plays an essential role in the initiation and regulation of chromosomal replication. ATP-DnaA binds to the origin of replication (oriC) to initiate formation of the DNA replication initiation complex once per cell cycle. Binds the DnaA box (a 9 base pair repeat at the origin) and separates the double-stranded (ds)DNA. Forms a right-handed helical filament on oriC DNA; dsDNA binds to the exterior of the filament while single-stranded (ss)DNA is stabiized in the filament's interior. The ATP-DnaA-oriC complex binds and stabilizes one strand of the AT-rich DNA unwinding element (DUE), permitting loading of DNA polymerase. After initiation quickly degrades to an ADP-DnaA complex that is not apt for DNA replication. Binds acidic phospholipids. This chain is Chromosomal replication initiator protein DnaA, found in Nitrosococcus oceani (strain ATCC 19707 / BCRC 17464 / JCM 30415 / NCIMB 11848 / C-107).